The sequence spans 473 residues: Photosystem II CP43 reaction center protein (473 aa).

A propeptide spanning residues 1–14 (MKTLYSLRRFYPVE) is cleaved from the precursor. Threonine 15 bears the N-acetylthreonine mark. Threonine 15 carries the phosphothreonine modification. The next 5 helical transmembrane spans lie at 69–93 (LFEV…PHLA), 134–155 (LLGP…KDRN), 178–200 (KALY…RKIT), 255–275 (KPFA…LSYS), and 291–312 (WFNN…ASQA). Residue glutamate 367 participates in [CaMn4O5] cluster binding. The chain crosses the membrane as a helical span at residues 447–471 (RARAAAAGFEKGIDRDFEPVLSMTP).

It belongs to the PsbB/PsbC family. PsbC subfamily. As to quaternary structure, PSII is composed of 1 copy each of membrane proteins PsbA, PsbB, PsbC, PsbD, PsbE, PsbF, PsbH, PsbI, PsbJ, PsbK, PsbL, PsbM, PsbT, PsbX, PsbY, PsbZ, Psb30/Ycf12, at least 3 peripheral proteins of the oxygen-evolving complex and a large number of cofactors. It forms dimeric complexes. It depends on Binds multiple chlorophylls and provides some of the ligands for the Ca-4Mn-5O cluster of the oxygen-evolving complex. It may also provide a ligand for a Cl- that is required for oxygen evolution. PSII binds additional chlorophylls, carotenoids and specific lipids. as a cofactor.

It localises to the plastid. The protein resides in the chloroplast thylakoid membrane. Functionally, one of the components of the core complex of photosystem II (PSII). It binds chlorophyll and helps catalyze the primary light-induced photochemical processes of PSII. PSII is a light-driven water:plastoquinone oxidoreductase, using light energy to abstract electrons from H(2)O, generating O(2) and a proton gradient subsequently used for ATP formation. This is Photosystem II CP43 reaction center protein from Drimys granadensis.